Here is a 444-residue protein sequence, read N- to C-terminus: tRNA-2-methylthio-N(6)-dimethylallyladenosine synthase (444 aa).

The MTTase N-terminal domain occupies 2-119 (KKLYIRTFGC…LPSMLNEVLT (118 aa)). [4Fe-4S] cluster-binding residues include Cys-11, Cys-48, Cys-82, Cys-161, Cys-165, and Cys-168. The Radical SAM core domain occupies 147 to 379 (KTSSVTAFVS…QKTIDKNTER (233 aa)). The TRAM domain occupies 382–444 (KSMVGSVQKI…GNSLVGNLIA (63 aa)).

Belongs to the methylthiotransferase family. MiaB subfamily. In terms of assembly, monomer. [4Fe-4S] cluster is required as a cofactor.

It localises to the cytoplasm. It carries out the reaction N(6)-dimethylallyladenosine(37) in tRNA + (sulfur carrier)-SH + AH2 + 2 S-adenosyl-L-methionine = 2-methylsulfanyl-N(6)-dimethylallyladenosine(37) in tRNA + (sulfur carrier)-H + 5'-deoxyadenosine + L-methionine + A + S-adenosyl-L-homocysteine + 2 H(+). Catalyzes the methylthiolation of N6-(dimethylallyl)adenosine (i(6)A), leading to the formation of 2-methylthio-N6-(dimethylallyl)adenosine (ms(2)i(6)A) at position 37 in tRNAs that read codons beginning with uridine. The sequence is that of tRNA-2-methylthio-N(6)-dimethylallyladenosine synthase from Ruthia magnifica subsp. Calyptogena magnifica.